Here is a 507-residue protein sequence, read N- to C-terminus: Proline--tRNA ligase (507 aa).

The protein belongs to the class-II aminoacyl-tRNA synthetase family. ProS type 3 subfamily. As to quaternary structure, homodimer.

The protein localises to the cytoplasm. It catalyses the reaction tRNA(Pro) + L-proline + ATP = L-prolyl-tRNA(Pro) + AMP + diphosphate. Functionally, catalyzes the attachment of proline to tRNA(Pro) in a two-step reaction: proline is first activated by ATP to form Pro-AMP and then transferred to the acceptor end of tRNA(Pro). This chain is Proline--tRNA ligase, found in Protochlamydia amoebophila (strain UWE25).